The chain runs to 311 residues: Ribosomal RNA small subunit methyltransferase H (311 aa).

S-adenosyl-L-methionine contacts are provided by residues 34-36 (GGH), Asp-54, Phe-80, Asp-104, and Gln-111.

It belongs to the methyltransferase superfamily. RsmH family.

It is found in the cytoplasm. The catalysed reaction is cytidine(1402) in 16S rRNA + S-adenosyl-L-methionine = N(4)-methylcytidine(1402) in 16S rRNA + S-adenosyl-L-homocysteine + H(+). Functionally, specifically methylates the N4 position of cytidine in position 1402 (C1402) of 16S rRNA. In Teredinibacter turnerae (strain ATCC 39867 / T7901), this protein is Ribosomal RNA small subunit methyltransferase H.